Consider the following 272-residue polypeptide: 3-methyl-2-oxobutanoate hydroxymethyltransferase (272 aa).

The Mg(2+) site is built by Asp-43 and Asp-82. Residues 43 to 44 (DS), Asp-82, and Lys-112 contribute to the 3-methyl-2-oxobutanoate site. Glu-114 contacts Mg(2+). Glu-179 serves as the catalytic Proton acceptor.

This sequence belongs to the PanB family. In terms of assembly, homodecamer; pentamer of dimers. Mg(2+) serves as cofactor.

It localises to the cytoplasm. It carries out the reaction 3-methyl-2-oxobutanoate + (6R)-5,10-methylene-5,6,7,8-tetrahydrofolate + H2O = 2-dehydropantoate + (6S)-5,6,7,8-tetrahydrofolate. Its pathway is cofactor biosynthesis; (R)-pantothenate biosynthesis; (R)-pantoate from 3-methyl-2-oxobutanoate: step 1/2. Its function is as follows. Catalyzes the reversible reaction in which hydroxymethyl group from 5,10-methylenetetrahydrofolate is transferred onto alpha-ketoisovalerate to form ketopantoate. The chain is 3-methyl-2-oxobutanoate hydroxymethyltransferase from Staphylococcus aureus (strain JH1).